The primary structure comprises 350 residues: tRNA uridine(34) hydroxylase (350 aa).

A Rhodanese domain is found at 146–240 (DDPDAVFIDM…YARRAREQGL (95 aa)). The Cysteine persulfide intermediate role is filled by Cys200. The segment covering 319–328 (RRRRAGRENG) has biased composition (basic and acidic residues). A disordered region spans residues 319–350 (RRRRAGRENGNKIFNKSRGRLNSKLSIPDPAE).

The protein belongs to the TrhO family.

It carries out the reaction uridine(34) in tRNA + AH2 + O2 = 5-hydroxyuridine(34) in tRNA + A + H2O. Its function is as follows. Catalyzes oxygen-dependent 5-hydroxyuridine (ho5U) modification at position 34 in tRNAs. The sequence is that of tRNA uridine(34) hydroxylase from Salmonella dublin (strain CT_02021853).